A 241-amino-acid chain; its full sequence is Glutamate/aspartate import ATP-binding protein GltL (241 aa).

The ABC transporter domain occupies isoleucine 2 to leucine 236. Glycine 34–serine 41 lines the ATP pocket.

This sequence belongs to the ABC transporter superfamily. In terms of assembly, the complex is composed of two ATP-binding proteins (GltL), two transmembrane proteins (GltJ and GltK) and a solute-binding protein (GltI).

The protein resides in the cell inner membrane. It carries out the reaction a polar amino acid(out) + ATP + H2O = a polar amino acid(in) + ADP + phosphate + H(+). The catalysed reaction is L-glutamate(out) + ATP + H2O = L-glutamate(in) + ADP + phosphate + H(+). The enzyme catalyses L-aspartate(out) + ATP + H2O = L-aspartate(in) + ADP + phosphate + H(+). Functionally, part of the ABC transporter complex GltIJKL involved in glutamate and aspartate uptake. Probably responsible for energy coupling to the transport system. The sequence is that of Glutamate/aspartate import ATP-binding protein GltL (gltL) from Escherichia coli O157:H7.